The primary structure comprises 218 residues: Thiopurine S-methyltransferase (218 aa).

Residues Trp-10, Leu-45, Glu-66, and Arg-123 each contribute to the S-adenosyl-L-methionine site.

It belongs to the class I-like SAM-binding methyltransferase superfamily. TPMT family.

The protein resides in the cytoplasm. The catalysed reaction is S-adenosyl-L-methionine + a thiopurine = S-adenosyl-L-homocysteine + a thiopurine S-methylether.. This Shewanella baltica (strain OS155 / ATCC BAA-1091) protein is Thiopurine S-methyltransferase.